The primary structure comprises 60 residues: Cytochrome c oxidase subunit 9, mitochondrial (60 aa).

The Mitochondrial matrix portion of the chain corresponds to 1 to 15 (MSALAPITGTLKKRI). The chain crosses the membrane as a helical span at residues 16-38 (ITDIVIGFSLGGVMASYWWWGFH). Over 39–57 (KNVIDRREAFYADLAEKKK) the chain is Mitochondrial intermembrane. Positions 58 to 60 (AEN) are cleaved as a propeptide — removed in mature form.

It belongs to the fungal cytochrome c oxidase subunit 7a family. In terms of assembly, component of the cytochrome c oxidase (complex IV, CIV), a multisubunit enzyme composed of a catalytic core of 3 subunits and several supernumerary subunits. The complex exists as a monomer or a dimer and forms supercomplexes (SCs) in the inner mitochondrial membrane with ubiquinol-cytochrome c oxidoreductase (cytochrome b-c1 complex, complex III, CIII).

It is found in the mitochondrion inner membrane. The protein operates within energy metabolism; oxidative phosphorylation. Its function is as follows. Component of the cytochrome c oxidase, the last enzyme in the mitochondrial electron transport chain which drives oxidative phosphorylation. The respiratory chain contains 3 multisubunit complexes succinate dehydrogenase (complex II, CII), ubiquinol-cytochrome c oxidoreductase (cytochrome b-c1 complex, complex III, CIII) and cytochrome c oxidase (complex IV, CIV), that cooperate to transfer electrons derived from NADH and succinate to molecular oxygen, creating an electrochemical gradient over the inner membrane that drives transmembrane transport and the ATP synthase. Cytochrome c oxidase is the component of the respiratory chain that catalyzes the reduction of oxygen to water. Electrons originating from reduced cytochrome c in the intermembrane space (IMS) are transferred via the dinuclear copper A center (CU(A)) of subunit 2 and heme A of subunit 1 to the active site in subunit 1, a binuclear center (BNC) formed by heme A3 and copper B (CU(B)). The BNC reduces molecular oxygen to 2 water molecules using 4 electrons from cytochrome c in the IMS and 4 protons from the mitochondrial matrix. The polypeptide is Cytochrome c oxidase subunit 9, mitochondrial (COX9) (Candida glabrata (strain ATCC 2001 / BCRC 20586 / JCM 3761 / NBRC 0622 / NRRL Y-65 / CBS 138) (Yeast)).